The primary structure comprises 302 residues: uncharacterized protein (302 aa).

Disordered regions lie at residues Met1–Glu167 and Pro180–Ser199. The span at Glu39–Ser54 shows a compositional bias: basic and acidic residues. Composition is skewed to polar residues over residues Leu123–Arg133 and Cys183–Arg197.

This is an uncharacterized protein from Homo sapiens (Human).